A 229-amino-acid chain; its full sequence is Probable queuosine precursor transporter (229 aa).

A run of 7 helical transmembrane segments spans residues 6-26 (FWIFFAIIHFIIVLLFYKGFG), 28-48 (MGLFVWIGFATVCANLQVVKT), 49-69 (VELFGLTATLGNVMYGTIFFA), 86-106 (VWLGFSTLLTLTFVMQGVLLF), 118-138 (LETIFGFLPRVALGSLLAFIF), 160-182 (LWLRNGGSTAVSQLFDTFIFTAV), and 192-214 (VWLHIFISTYLIKFAVSLISLPY).

This sequence belongs to the vitamin uptake transporter (VUT/ECF) (TC 2.A.88) family. Q precursor transporter subfamily.

It is found in the cell membrane. Involved in the import of queuosine (Q) precursors, required for Q precursor salvage. This chain is Probable queuosine precursor transporter (ypdP), found in Bacillus subtilis (strain 168).